The primary structure comprises 111 residues: Large ribosomal subunit protein uL29 (111 aa).

The tract at residues Met1–Asn85 is large ribosomal subunit protein uL29. A unknown region spans residues Ala86–Lys111.

It belongs to the universal ribosomal protein uL29 family.

In Mycoplasma pneumoniae (strain ATCC 29342 / M129 / Subtype 1) (Mycoplasmoides pneumoniae), this protein is Large ribosomal subunit protein uL29.